Here is an 89-residue protein sequence, read N- to C-terminus: Small ribosomal subunit protein uS15 (89 aa).

Belongs to the universal ribosomal protein uS15 family. Part of the 30S ribosomal subunit. Forms a bridge to the 50S subunit in the 70S ribosome, contacting the 23S rRNA.

One of the primary rRNA binding proteins, it binds directly to 16S rRNA where it helps nucleate assembly of the platform of the 30S subunit by binding and bridging several RNA helices of the 16S rRNA. Its function is as follows. Forms an intersubunit bridge (bridge B4) with the 23S rRNA of the 50S subunit in the ribosome. This is Small ribosomal subunit protein uS15 from Escherichia coli O139:H28 (strain E24377A / ETEC).